The chain runs to 313 residues: Carbamate kinase 2 (313 aa).

It belongs to the carbamate kinase family.

It localises to the cytoplasm. The catalysed reaction is hydrogencarbonate + NH4(+) + ATP = carbamoyl phosphate + ADP + H2O + H(+). It participates in metabolic intermediate metabolism; carbamoyl phosphate degradation; CO(2) and NH(3) from carbamoyl phosphate: step 1/1. This chain is Carbamate kinase 2 (arcC2), found in Staphylococcus aureus (strain bovine RF122 / ET3-1).